Here is a 366-residue protein sequence, read N- to C-terminus: Outer membrane porin C 2 (366 aa).

The N-terminal stretch at 1 to 21 is a signal peptide; the sequence is MKLKIVAVVVTGLLAANVAHA.

Belongs to the Gram-negative porin family. As to quaternary structure, homotrimer. Forms mixed heterotrimers with OmpF and with PhoE; other mixed heterotrimers are also probable.

The protein localises to the cell outer membrane. Forms pores that allow passive diffusion of small molecules across the outer membrane. Plays a role in virulence. The protein is Outer membrane porin C 2 of Shigella flexneri serotype 5a (strain M90T).